A 238-amino-acid polypeptide reads, in one-letter code: DNA repair protein RecO (238 aa).

It belongs to the RecO family.

Functionally, involved in DNA repair and RecF pathway recombination. This is DNA repair protein RecO from Anaplasma marginale (strain St. Maries).